The sequence spans 283 residues: Putative replication protein XF_b0001 (283 aa).

This chain is Putative replication protein XF_b0001, found in Xylella fastidiosa (strain 9a5c).